Here is a 130-residue protein sequence, read N- to C-terminus: Anti-adapter protein IraD (130 aa).

This sequence belongs to the GpW/Gp25 family. IraD subfamily. As to quaternary structure, interacts with RssB.

It localises to the cytoplasm. Functionally, inhibits RpoS proteolysis by regulating RssB activity, thereby increasing the stability of the sigma stress factor RpoS during oxidative stress. Its effect on RpoS stability is due to its interaction with RssB, which probably blocks the interaction of RssB with RpoS, and the consequent delivery of the RssB-RpoS complex to the ClpXP protein degradation pathway. The protein is Anti-adapter protein IraD of Escherichia coli O157:H7.